The following is a 380-amino-acid chain: DNA-directed RNA polymerase subunit Rpo1C (380 aa).

This sequence belongs to the RNA polymerase beta' chain family. In terms of assembly, part of the RNA polymerase complex.

Its subcellular location is the cytoplasm. It catalyses the reaction RNA(n) + a ribonucleoside 5'-triphosphate = RNA(n+1) + diphosphate. Functionally, DNA-dependent RNA polymerase (RNAP) catalyzes the transcription of DNA into RNA using the four ribonucleoside triphosphates as substrates. Forms part of the jaw domain. The protein is DNA-directed RNA polymerase subunit Rpo1C of Archaeoglobus fulgidus (strain ATCC 49558 / DSM 4304 / JCM 9628 / NBRC 100126 / VC-16).